Here is a 58-residue protein sequence, read N- to C-terminus: Small ribosomal subunit protein bS21 (58 aa).

The disordered stretch occupies residues 36–58 (EHYEKPSVKRKKKSEAARRRKYR). Basic residues predominate over residues 43–58 (VKRKKKSEAARRRKYR).

The protein belongs to the bacterial ribosomal protein bS21 family.

The protein is Small ribosomal subunit protein bS21 of Symbiobacterium thermophilum (strain DSM 24528 / JCM 14929 / IAM 14863 / T).